The sequence spans 190 residues: Elongation factor P 2 (190 aa).

The protein belongs to the elongation factor P family.

The protein resides in the cytoplasm. It participates in protein biosynthesis; polypeptide chain elongation. Its function is as follows. Involved in peptide bond synthesis. Stimulates efficient translation and peptide-bond synthesis on native or reconstituted 70S ribosomes in vitro. Probably functions indirectly by altering the affinity of the ribosome for aminoacyl-tRNA, thus increasing their reactivity as acceptors for peptidyl transferase. The polypeptide is Elongation factor P 2 (efp2) (Chlamydia trachomatis serovar D (strain ATCC VR-885 / DSM 19411 / UW-3/Cx)).